The primary structure comprises 454 residues: MASLNENQKFWARVTELARQSIGKQAYDFFIEPAQLMSVEQDTANILLDSGMKKDYWKKQSDLITTAGFEVFGRMIDYELYANDELTDIELRRLNNQSPVDEPLSVAKPTSPLVSGLNEKYNFENFVQGPGNRWTLAAAIAVADKPGDTYNPLFIYGGAGLGKTHLMHAIGNQILTDNPTARIKYVSSENFVNDYVNATRKNQMESFENTYRNLDLLLLDDVQFFSDKEGTKNEFFNTFNALYDKGSQIVLTSDRIPQELNNLEDRLVSRFSWGLTTDITAPDYETRMAILLIKSESSHLEFPSETLSYIAGQIDSNVRELEGALNRVEFVARANGISIVDIETASQALRSLKNATQQSLSNLTIKKIQDEVANYYHISFSDLVGPKRPKEIAFPRQIAMYLVRELLGTSLPAIGTAFGGRDHTTVMYAYKQISDKMKNDMDVQKDIDSIKRKF.

Positions 1–77 (MASLNENQKF…GFEVFGRMID (77 aa)) are domain I, interacts with DnaA modulators. The interval 77–115 (DYELYANDELTDIELRRLNNQSPVDEPLSVAKPTSPLVS) is domain II. Positions 116–332 (GLNEKYNFEN…GALNRVEFVA (217 aa)) are domain III, AAA+ region. Positions 160, 162, 163, and 164 each coordinate ATP. The tract at residues 333 to 454 (RANGISIVDI…KDIDSIKRKF (122 aa)) is domain IV, binds dsDNA.

The protein belongs to the DnaA family. Oligomerizes as a right-handed, spiral filament on DNA at oriC.

The protein resides in the cytoplasm. Functionally, plays an essential role in the initiation and regulation of chromosomal replication. ATP-DnaA binds to the origin of replication (oriC) to initiate formation of the DNA replication initiation complex once per cell cycle. Binds the DnaA box (a 9 base pair repeat at the origin) and separates the double-stranded (ds)DNA. Forms a right-handed helical filament on oriC DNA; dsDNA binds to the exterior of the filament while single-stranded (ss)DNA is stabiized in the filament's interior. The ATP-DnaA-oriC complex binds and stabilizes one strand of the AT-rich DNA unwinding element (DUE), permitting loading of DNA polymerase. After initiation quickly degrades to an ADP-DnaA complex that is not apt for DNA replication. Binds acidic phospholipids. The protein is Chromosomal replication initiator protein DnaA of Lactococcus lactis subsp. cremoris (strain MG1363).